A 117-amino-acid polypeptide reads, in one-letter code: UPF0344 protein GWCH70_0687 (117 aa).

Helical transmembrane passes span threonine 2 to leucine 22, isoleucine 32 to leucine 52, isoleucine 55 to alanine 75, and isoleucine 97 to phenylalanine 117.

Belongs to the UPF0344 family.

It localises to the cell membrane. The polypeptide is UPF0344 protein GWCH70_0687 (Geobacillus sp. (strain WCH70)).